A 371-amino-acid polypeptide reads, in one-letter code: MSQDYYKILGVSKTASQADLKKAYLKLAKQYHPDTTDDKDAEKKFKEINRAYDVLKDEQKRAAYDRFGHDTFQNQQSRGGGGSHAGFHHDINDIFGDFFSDFMGGGRRKPTSSKARGSDLKYDLTINLEEAFHGIEKNISFSSEVKCDTCHGSGSEKGETVTTCDACGGVGATRIQQGFFTIEQACHKCKGNGQIIKNPCKKCHGMGRCHKQRNLSVNIPAGVENGTRIRHTGEGEAGIRGGNSGDLYVDIAITPHDIYKVDGANLHCKLPISFVNAALGGEIEVPVIEGRKVNLTIPAGTQNGDQLRLRSKGMPKMRSTIRGDMITHIHIEVPKNLSKRQCELLEEFKKESISEKENDGSFFNKMKSLWS.

The J domain maps to 4–68 (DYYKILGVSK…QKRAAYDRFG (65 aa)). The segment at 134–212 (GIEKNISFSS…CHGMGRCHKQ (79 aa)) adopts a CR-type zinc-finger fold. Residues Cys147, Cys150, Cys164, Cys167, Cys186, Cys189, Cys200, and Cys203 each contribute to the Zn(2+) site. CXXCXGXG motif repeat units follow at residues 147–154 (CDTCHGSG), 164–171 (CDACGGVG), 186–193 (CHKCKGNG), and 200–207 (CKKCHGMG).

The protein belongs to the DnaJ family. As to quaternary structure, homodimer. Zn(2+) is required as a cofactor.

It is found in the cytoplasm. Functionally, participates actively in the response to hyperosmotic and heat shock by preventing the aggregation of stress-denatured proteins and by disaggregating proteins, also in an autonomous, DnaK-independent fashion. Unfolded proteins bind initially to DnaJ; upon interaction with the DnaJ-bound protein, DnaK hydrolyzes its bound ATP, resulting in the formation of a stable complex. GrpE releases ADP from DnaK; ATP binding to DnaK triggers the release of the substrate protein, thus completing the reaction cycle. Several rounds of ATP-dependent interactions between DnaJ, DnaK and GrpE are required for fully efficient folding. Also involved, together with DnaK and GrpE, in the DNA replication of plasmids through activation of initiation proteins. The chain is Chaperone protein DnaJ from Rickettsia akari (strain Hartford).